We begin with the raw amino-acid sequence, 103 residues long: NAD(P)H-quinone oxidoreductase subunit 4L (103 aa).

3 consecutive transmembrane segments (helical) span residues 5 to 25, 32 to 52, and 66 to 86; these read LQYC…GLIT, VLMS…GFSN, and IFVI…VLAI.

This sequence belongs to the complex I subunit 4L family. As to quaternary structure, NDH-1 can be composed of about 15 different subunits; different subcomplexes with different compositions have been identified which probably have different functions.

Its subcellular location is the cellular thylakoid membrane. The catalysed reaction is a plastoquinone + NADH + (n+1) H(+)(in) = a plastoquinol + NAD(+) + n H(+)(out). It catalyses the reaction a plastoquinone + NADPH + (n+1) H(+)(in) = a plastoquinol + NADP(+) + n H(+)(out). NDH-1 shuttles electrons from an unknown electron donor, via FMN and iron-sulfur (Fe-S) centers, to quinones in the respiratory and/or the photosynthetic chain. The immediate electron acceptor for the enzyme in this species is believed to be plastoquinone. Couples the redox reaction to proton translocation, and thus conserves the redox energy in a proton gradient. Cyanobacterial NDH-1 also plays a role in inorganic carbon-concentration. This chain is NAD(P)H-quinone oxidoreductase subunit 4L, found in Synechocystis sp. (strain ATCC 27184 / PCC 6803 / Kazusa).